Consider the following 94-residue polypeptide: Co-chaperonin GroES (94 aa).

This sequence belongs to the GroES chaperonin family. Heptamer of 7 subunits arranged in a ring. Interacts with the chaperonin GroEL.

Its subcellular location is the cytoplasm. Together with the chaperonin GroEL, plays an essential role in assisting protein folding. The GroEL-GroES system forms a nano-cage that allows encapsulation of the non-native substrate proteins and provides a physical environment optimized to promote and accelerate protein folding. GroES binds to the apical surface of the GroEL ring, thereby capping the opening of the GroEL channel. The sequence is that of Co-chaperonin GroES from Lactococcus lactis subsp. cremoris (strain MG1363).